The sequence spans 156 residues: ATP synthase subunit b (156 aa).

A helical transmembrane segment spans residues 3 to 23 (ITLTIFAQALAFAGLIWIVAT).

The protein belongs to the ATPase B chain family. As to quaternary structure, F-type ATPases have 2 components, F(1) - the catalytic core - and F(0) - the membrane proton channel. F(1) has five subunits: alpha(3), beta(3), gamma(1), delta(1), epsilon(1). F(0) has three main subunits: a(1), b(2) and c(10-14). The alpha and beta chains form an alternating ring which encloses part of the gamma chain. F(1) is attached to F(0) by a central stalk formed by the gamma and epsilon chains, while a peripheral stalk is formed by the delta and b chains.

Its subcellular location is the cell inner membrane. Functionally, f(1)F(0) ATP synthase produces ATP from ADP in the presence of a proton or sodium gradient. F-type ATPases consist of two structural domains, F(1) containing the extramembraneous catalytic core and F(0) containing the membrane proton channel, linked together by a central stalk and a peripheral stalk. During catalysis, ATP synthesis in the catalytic domain of F(1) is coupled via a rotary mechanism of the central stalk subunits to proton translocation. Component of the F(0) channel, it forms part of the peripheral stalk, linking F(1) to F(0). The protein is ATP synthase subunit b of Xanthomonas axonopodis pv. citri (strain 306).